The primary structure comprises 376 residues: MSKRDYYEVLGVARTANDEELKKAYRRCAMKFHPDRNPGDAAAEASFKECKEAYEVLSDGNKRRMYDSHGHAAFEHGMGGGGGPGGPDMNDIFGDIFGNIFGGAGGGGPRQARRGADIGYVMELDLEEAVRGVERRIEIPTLAECGDCDGSGSEDGKVETCNVCHGRGQVRIQRGIFAMQQACHNCGGRGQIIAKPCKTCHGNGRVEEDKVLSVKVPAGVDTGDRIRLSGEGEAGPAGTPPGDLYVEVRVREHAIFQRDGDDLHCEVPIRISQAALGDTVRVATLGGEAEIRIPAETQTGKLFRLRGKGVRSVRSRSEGDLYCRVVVETPVNLTNDQRKLLEQFEATFNGEDARKHSPKSATFIDGVKGFWDRMTS.

In terms of domain architecture, J spans 5–70 (DYYEVLGVAR…NKRRMYDSHG (66 aa)). The segment at 132–209 (GVERRIEIPT…CHGNGRVEED (78 aa)) adopts a CR-type zinc-finger fold. Positions 145, 148, 161, 164, 183, 186, 197, and 200 each coordinate Zn(2+). 4 CXXCXGXG motif repeats span residues 145-152 (CGDCDGSG), 161-168 (CNVCHGRG), 183-190 (CHNCGGRG), and 197-204 (CKTCHGNG). Residues 223-242 (GDRIRLSGEGEAGPAGTPPG) form a disordered region.

This sequence belongs to the DnaJ family. Homodimer. Zn(2+) serves as cofactor.

The protein localises to the cytoplasm. Functionally, participates actively in the response to hyperosmotic and heat shock by preventing the aggregation of stress-denatured proteins and by disaggregating proteins, also in an autonomous, DnaK-independent fashion. Unfolded proteins bind initially to DnaJ; upon interaction with the DnaJ-bound protein, DnaK hydrolyzes its bound ATP, resulting in the formation of a stable complex. GrpE releases ADP from DnaK; ATP binding to DnaK triggers the release of the substrate protein, thus completing the reaction cycle. Several rounds of ATP-dependent interactions between DnaJ, DnaK and GrpE are required for fully efficient folding. Also involved, together with DnaK and GrpE, in the DNA replication of plasmids through activation of initiation proteins. The chain is Chaperone protein DnaJ from Stenotrophomonas maltophilia (strain R551-3).